The primary structure comprises 348 residues: Tetraacyldisaccharide 4'-kinase (348 aa).

54–61 lines the ATP pocket; that stretch reads TVGGAGKT.

This sequence belongs to the LpxK family.

The enzyme catalyses a lipid A disaccharide + ATP = a lipid IVA + ADP + H(+). It participates in glycolipid biosynthesis; lipid IV(A) biosynthesis; lipid IV(A) from (3R)-3-hydroxytetradecanoyl-[acyl-carrier-protein] and UDP-N-acetyl-alpha-D-glucosamine: step 6/6. Functionally, transfers the gamma-phosphate of ATP to the 4'-position of a tetraacyldisaccharide 1-phosphate intermediate (termed DS-1-P) to form tetraacyldisaccharide 1,4'-bis-phosphate (lipid IVA). This chain is Tetraacyldisaccharide 4'-kinase, found in Agrobacterium fabrum (strain C58 / ATCC 33970) (Agrobacterium tumefaciens (strain C58)).